A 319-amino-acid polypeptide reads, in one-letter code: Putative peptide biosynthesis protein YydG (319 aa).

The 214-residue stretch at 1 to 214 (MYNKTVSINL…HCPGYDIVYH (214 aa)) folds into the Radical SAM core domain. [4Fe-4S] cluster-binding residues include cysteine 14, cysteine 18, and cysteine 21.

[4Fe-4S] cluster is required as a cofactor.

Functionally, required for production of the modified peptide YydF. May activate a metalloenzyme (Potential). In Bacillus subtilis (strain 168), this protein is Putative peptide biosynthesis protein YydG (yydG).